The following is a 479-amino-acid chain: Anaerobic nitric oxide reductase flavorubredoxin (479 aa).

Positions 30–210 (LRGSSYNSYL…PFSRLVTPKI (181 aa)) are zinc metallo-hydrolase. Residues H79, E81, D83, H147, D166, and H227 each coordinate Fe cation. The region spanning 254-393 (ITIFYDTMSN…LCRQHGRDIA (140 aa)) is the Flavodoxin-like domain. Residues 260 to 264 (TMSNN) and 342 to 369 (AFGSHGWSGGAVDRLSTRLQDAGFEMSL) each bind FMN. One can recognise a Rubredoxin-like domain in the interval 423–474 (GPKMQCSVCQWIYDPALGEPLQDVAPGTPWSDVPDNFLCPECSLGKDVFDVL). Residues C428, C431, C461, and C464 each coordinate Fe cation.

In the N-terminal section; belongs to the zinc metallo-hydrolase group 3 family. In terms of assembly, homotetramer. Fe cation is required as a cofactor. The cofactor is FMN.

It localises to the cytoplasm. Its pathway is nitrogen metabolism; nitric oxide reduction. Functionally, anaerobic nitric oxide reductase; uses NADH to detoxify nitric oxide (NO), protecting several 4Fe-4S NO-sensitive enzymes. Has at least 2 reductase partners, only one of which (NorW, flavorubredoxin reductase) has been identified. NO probably binds to the di-iron center; electrons enter from the NorW at rubredoxin and are transferred sequentially to the FMN center and the di-iron center. Also able to function as an aerobic oxygen reductase. This is Anaerobic nitric oxide reductase flavorubredoxin from Salmonella arizonae (strain ATCC BAA-731 / CDC346-86 / RSK2980).